Reading from the N-terminus, the 324-residue chain is ATP-dependent 6-phosphofructokinase (324 aa).

Residue G11 participates in ATP binding. 21 to 25 serves as a coordination point for ADP; that stretch reads RAVVR. Residues 72–73 and 102–105 contribute to the ATP site; these read RE and GNGS. Residue N103 coordinates Mg(2+). Substrate is bound at residue 126 to 128; sequence TID. Catalysis depends on D128, which acts as the Proton acceptor. Residue R155 coordinates ADP. Substrate is bound by residues R163 and 170 to 172; that span reads MGR. Residues 186-188, R212, and 214-216 contribute to the ADP site; these read GAD and KKF. Substrate contacts are provided by residues E223, R248, and 254 to 257; that span reads YIQR.

This sequence belongs to the phosphofructokinase type A (PFKA) family. ATP-dependent PFK group I subfamily. Prokaryotic clade 'B1' sub-subfamily. In terms of assembly, homotetramer. Requires Mg(2+) as cofactor.

It localises to the cytoplasm. It catalyses the reaction beta-D-fructose 6-phosphate + ATP = beta-D-fructose 1,6-bisphosphate + ADP + H(+). The protein operates within carbohydrate degradation; glycolysis; D-glyceraldehyde 3-phosphate and glycerone phosphate from D-glucose: step 3/4. Its activity is regulated as follows. Allosterically activated by ADP and other diphosphonucleosides, and allosterically inhibited by phosphoenolpyruvate. In terms of biological role, catalyzes the phosphorylation of D-fructose 6-phosphate to fructose 1,6-bisphosphate by ATP, the first committing step of glycolysis. The sequence is that of ATP-dependent 6-phosphofructokinase from Persephonella marina (strain DSM 14350 / EX-H1).